The sequence spans 152 residues: UPF0266 membrane protein YobD (152 aa).

3 helical membrane-spanning segments follow: residues 6–26 (LLLILFIAALLAYALYDQFIM), 45–65 (VDSVIFVGLVAILIYNNVTSH), and 67–87 (AQMTTWLLSALALMGFYIFWI).

Belongs to the UPF0266 family.

The protein resides in the cell inner membrane. The chain is UPF0266 membrane protein YobD from Salmonella paratyphi C (strain RKS4594).